The primary structure comprises 535 residues: ABC1 family protein C10F6.14c (535 aa).

This sequence belongs to the protein kinase superfamily. ADCK protein kinase family.

This chain is ABC1 family protein C10F6.14c, found in Schizosaccharomyces pombe (strain 972 / ATCC 24843) (Fission yeast).